The primary structure comprises 126 residues: Large ribosomal subunit protein bL12 (126 aa).

Belongs to the bacterial ribosomal protein bL12 family. In terms of assembly, homodimer. Part of the ribosomal stalk of the 50S ribosomal subunit. Forms a multimeric L10(L12)X complex, where L10 forms an elongated spine to which 2 to 4 L12 dimers bind in a sequential fashion. Binds GTP-bound translation factors.

In terms of biological role, forms part of the ribosomal stalk which helps the ribosome interact with GTP-bound translation factors. Is thus essential for accurate translation. The sequence is that of Large ribosomal subunit protein bL12 from Acidovorax sp. (strain JS42).